The chain runs to 514 residues: Peptide chain release factor 3 (514 aa).

One can recognise a tr-type G domain in the interval 8 to 268 (KKRRTFAIIS…TFLKFAPEPH (261 aa)). GTP-binding positions include 17–24 (SHPDAGKT), 85–89 (DTPGH), and 139–142 (NKLD).

The protein belongs to the TRAFAC class translation factor GTPase superfamily. Classic translation factor GTPase family. PrfC subfamily.

The protein localises to the cytoplasm. Its function is as follows. Increases the formation of ribosomal termination complexes and stimulates activities of RF-1 and RF-2. It binds guanine nucleotides and has strong preference for UGA stop codons. It may interact directly with the ribosome. The stimulation of RF-1 and RF-2 is significantly reduced by GTP and GDP, but not by GMP. In Streptococcus pneumoniae serotype 19F (strain G54), this protein is Peptide chain release factor 3.